The following is a 123-amino-acid chain: MPTINQLIAQPRKAQKARNKVPALNACPQKRGVCTRVYTTTPKKPNSALRKVAKVRLTNGFEVIGYIPGEGHNLQEHSVVMIRGGRVKDLPGVRYHILRGVLDTQGVKNRKQRRSKYGAKRPK.

Position 89 is a 3-methylthioaspartic acid (Asp-89).

It belongs to the universal ribosomal protein uS12 family. In terms of assembly, part of the 30S ribosomal subunit. Contacts proteins S8 and S17. May interact with IF1 in the 30S initiation complex.

With S4 and S5 plays an important role in translational accuracy. In terms of biological role, interacts with and stabilizes bases of the 16S rRNA that are involved in tRNA selection in the A site and with the mRNA backbone. Located at the interface of the 30S and 50S subunits, it traverses the body of the 30S subunit contacting proteins on the other side and probably holding the rRNA structure together. The combined cluster of proteins S8, S12 and S17 appears to hold together the shoulder and platform of the 30S subunit. This chain is Small ribosomal subunit protein uS12, found in Methylorubrum extorquens (strain PA1) (Methylobacterium extorquens).